Reading from the N-terminus, the 571-residue chain is Cationic amino acid transporter 8 (571 aa).

Asn35 carries an N-linked (GlcNAc...) asparagine glycan. Transmembrane regions (helical) follow at residues 39–59, 94–114, 117–137, 148–168, 177–197, and 217–237; these read FWLL…YFDW, SLYP…GFLY, IGPK…WVFL, FLSF…ILTI, TFIL…PATL, and IFLI…LMPF. 3 N-linked (GlcNAc...) asparagine glycosylation sites follow: Asn298, Asn325, and Asn346. Residues 365–385 traverse the membrane as a helical segment; that stretch reads LFFKVLLSYPSICIIVYFILF. The N-linked (GlcNAc...) asparagine glycan is linked to Asn386. 5 helical membrane passes run 405–425, 433–453, 461–481, 488–508, and 528–548; these read SIIN…IIFG, SAII…TALI, VSAF…YCFI, VVFG…SLLC, and VVLL…VLYF.

This sequence belongs to the SLC43A transporter (TC 2.A.1.44) family.

The protein resides in the membrane. It catalyses the reaction L-arginine(in) = L-arginine(out). Its function is as follows. Sodium-independent cationic amino acid transporter. Transports L-arginine, L-lysine, L-histidine and L-ornithine. The polypeptide is Cationic amino acid transporter 8 (Plasmodium vivax (strain Salvador I)).